We begin with the raw amino-acid sequence, 142 residues long: Large ribosomal subunit protein uL13 (142 aa).

Belongs to the universal ribosomal protein uL13 family. In terms of assembly, part of the 50S ribosomal subunit.

This protein is one of the early assembly proteins of the 50S ribosomal subunit, although it is not seen to bind rRNA by itself. It is important during the early stages of 50S assembly. In Azotobacter vinelandii (strain DJ / ATCC BAA-1303), this protein is Large ribosomal subunit protein uL13.